A 338-amino-acid chain; its full sequence is tRNA N6-adenosine threonylcarbamoyltransferase (338 aa).

Histidine 111 and histidine 115 together coordinate Fe cation. Residues leucine 134–glycine 138, aspartate 167, glycine 180, and asparagine 272 each bind substrate. Fe cation is bound at residue aspartate 300.

It belongs to the KAE1 / TsaD family. It depends on Fe(2+) as a cofactor.

Its subcellular location is the cytoplasm. The enzyme catalyses L-threonylcarbamoyladenylate + adenosine(37) in tRNA = N(6)-L-threonylcarbamoyladenosine(37) in tRNA + AMP + H(+). Functionally, required for the formation of a threonylcarbamoyl group on adenosine at position 37 (t(6)A37) in tRNAs that read codons beginning with adenine. Is involved in the transfer of the threonylcarbamoyl moiety of threonylcarbamoyl-AMP (TC-AMP) to the N6 group of A37, together with TsaE and TsaB. TsaD likely plays a direct catalytic role in this reaction. This chain is tRNA N6-adenosine threonylcarbamoyltransferase, found in Aliivibrio salmonicida (strain LFI1238) (Vibrio salmonicida (strain LFI1238)).